Here is a 570-residue protein sequence, read N- to C-terminus: Adenine deaminase (570 aa).

The protein belongs to the metallo-dependent hydrolases superfamily. Adenine deaminase family. Mn(2+) serves as cofactor.

It carries out the reaction adenine + H2O + H(+) = hypoxanthine + NH4(+). The sequence is that of Adenine deaminase from Petrotoga mobilis (strain DSM 10674 / SJ95).